The primary structure comprises 533 residues: WD repeat-containing protein JIP5 (533 aa).

5 WD repeats span residues 26-67, 84-130, 176-215, 264-309, and 372-409; these read NYSD…EKQS, GKVS…GSCR, NSNDSITKLCHSATNSCLLAGTENGHVLVYDSKNLGGSKL, NQDD…FMDQ, and GAADEVGLLEIDYDYRLISAGMESLKIWSNEQNEEIAL. Acidic residues-rich tracts occupy residues 408–428 and 437–452; these read ALDESDDSDDESDSDNSEDDL and ASDEEIEENKEEEDEK. The segment at 408–533 is disordered; that stretch reads ALDESDDSDD…EHGIRRFDDL (126 aa). Basic and acidic residues-rich tracts occupy residues 453–463 and 521–533; these read EDKPVKIDHPL and QKHEHGIRRFDDL.

Belongs to the WD repeat WDR55 family.

The protein localises to the nucleus. The protein resides in the nucleolus. In Scheffersomyces stipitis (strain ATCC 58785 / CBS 6054 / NBRC 10063 / NRRL Y-11545) (Yeast), this protein is WD repeat-containing protein JIP5 (JIP5).